A 295-amino-acid chain; its full sequence is Glutamyl-Q tRNA(Asp) synthetase (295 aa).

Residues 9–13 (RFAPT) and Glu45 contribute to the L-glutamate site. A 'HIGH' region motif is present at residues 12–22 (PTPSGYLHFGS). Zn(2+) contacts are provided by Cys101, Cys103, Tyr115, and Cys119. L-glutamate contacts are provided by Tyr172 and Arg190. A 'KMSKS' region motif is present at residues 228-232 (KLGKS). Lys231 provides a ligand contact to ATP.

Belongs to the class-I aminoacyl-tRNA synthetase family. GluQ subfamily. Zn(2+) serves as cofactor.

Functionally, catalyzes the tRNA-independent activation of glutamate in presence of ATP and the subsequent transfer of glutamate onto a tRNA(Asp). Glutamate is transferred on the 2-amino-5-(4,5-dihydroxy-2-cyclopenten-1-yl) moiety of the queuosine in the wobble position of the QUC anticodon. This is Glutamyl-Q tRNA(Asp) synthetase from Pseudomonas syringae pv. tomato (strain ATCC BAA-871 / DC3000).